Reading from the N-terminus, the 88-residue chain is Protein transport protein SBH2 (88 aa).

The tract at residues 1–42 (MAASVPPGGQRILQKRRQAQSIKEKQAKQTPTSTRQAGYGGS) is disordered. At 1 to 61 (MAASVPPGGQ…DEANGFRVDS (61 aa)) the chain is on the cytoplasmic side. Polar residues predominate over residues 28-42 (KQTPTSTRQAGYGGS). The chain crosses the membrane as a helical span at residues 62–82 (LVVLFLSVGFIFSVIALHLLT).

It belongs to the SEC61-beta family. In terms of assembly, component of the heterotrimeric Ssh1 complex, which is composed of SSH1, SBH2 and SSS1.

It localises to the endoplasmic reticulum membrane. Functionally, part of the Ssh1 complex, which probably is the major component of a channel-forming translocon complex that may function exclusively in the cotranslational pathway of protein endoplasmic reticulum (ER) import. The sequence is that of Protein transport protein SBH2 (SBH2) from Saccharomyces cerevisiae (strain ATCC 204508 / S288c) (Baker's yeast).